Reading from the N-terminus, the 67-residue chain is Large ribosomal subunit protein bL35 (67 aa).

This sequence belongs to the bacterial ribosomal protein bL35 family.

This is Large ribosomal subunit protein bL35 from Rickettsia prowazekii (strain Madrid E).